Reading from the N-terminus, the 300-residue chain is Ribosomal protein L11 methyltransferase (300 aa).

S-adenosyl-L-methionine is bound by residues Thr152, Gly173, Asp195, and Asn234.

This sequence belongs to the methyltransferase superfamily. PrmA family.

The protein localises to the cytoplasm. The enzyme catalyses L-lysyl-[protein] + 3 S-adenosyl-L-methionine = N(6),N(6),N(6)-trimethyl-L-lysyl-[protein] + 3 S-adenosyl-L-homocysteine + 3 H(+). In terms of biological role, methylates ribosomal protein L11. The protein is Ribosomal protein L11 methyltransferase of Cupriavidus necator (strain ATCC 17699 / DSM 428 / KCTC 22496 / NCIMB 10442 / H16 / Stanier 337) (Ralstonia eutropha).